The chain runs to 66 residues: Large ribosomal subunit protein bL33c (66 aa).

The protein belongs to the bacterial ribosomal protein bL33 family.

Its subcellular location is the plastid. It localises to the chloroplast. This chain is Large ribosomal subunit protein bL33c, found in Helianthus annuus (Common sunflower).